Consider the following 316-residue polypeptide: Retinol dehydrogenase 7 (316 aa).

33 to 57 (FITGCDSGFGNLLARQLDRRGMRVL) contributes to the NADP(+) binding site. Position 163 (Ser163) interacts with substrate. Catalysis depends on Tyr175, which acts as the Proton acceptor.

Belongs to the short-chain dehydrogenases/reductases (SDR) family. As to expression, highly expressed in liver. Also expressed in lung, eye, kidney, and brain.

It is found in the microsome. The protein resides in the endoplasmic reticulum. It catalyses the reaction all-trans-retinol--[retinol-binding protein] + NAD(+) = all-trans-retinal--[retinol-binding protein] + NADH + H(+). It functions in the pathway cofactor metabolism; retinol metabolism. Functionally, acts on androgens and retinols, i.e. has steroid 3-alpha- and 17-beta-dehydrogenase and cis/trans-retinol catalytic activities. In Mus musculus (Mouse), this protein is Retinol dehydrogenase 7 (Rdh7).